Reading from the N-terminus, the 242-residue chain is tRNA pseudouridine synthase A (242 aa).

D51 functions as the Nucleophile in the catalytic mechanism. Y107 provides a ligand contact to substrate.

The protein belongs to the tRNA pseudouridine synthase TruA family. As to quaternary structure, homodimer.

The enzyme catalyses uridine(38/39/40) in tRNA = pseudouridine(38/39/40) in tRNA. Formation of pseudouridine at positions 38, 39 and 40 in the anticodon stem and loop of transfer RNAs. In Helicobacter pylori (strain G27), this protein is tRNA pseudouridine synthase A.